Here is a 693-residue protein sequence, read N- to C-terminus: Follicle-stimulating hormone receptor (693 aa).

The N-terminal stretch at 1–18 (MFLVFTCSLILLASCSSC) is a signal peptide. Cystine bridges form between cysteine 18–cysteine 25 and cysteine 23–cysteine 32. The LRRNT domain maps to 19–46 (QHHTCHCAGRIFICQESKVVQLPRDIPT). Residues 19 to 366 (QHHTCHCAGR…EDIMGYTILR (348 aa)) lie on the Extracellular side of the membrane. N-linked (GlcNAc...) asparagine glycosylation is present at asparagine 47. LRR repeat units lie at residues 49–72 (TELR…LLDL), 73–97 (EKIE…LPKL), 98–118 (HEIR…AFQH), 119–143 (LPSL…KVHS), 144–169 (FQKV…MGLS), 170–192 (SESV…AFNG), 193–216 (TYLD…VFQG), 217–240 (ANGP…GLEL), and 241–259 (IKKL…PDLS). N-linked (GlcNAc...) asparagine glycans are attached at residues asparagine 191 and asparagine 199. Residue asparagine 268 is glycosylated (N-linked (GlcNAc...) asparagine). 4 cysteine pairs are disulfide-bonded: cysteine 275/cysteine 346, cysteine 276/cysteine 292, cysteine 276/cysteine 356, and cysteine 292/cysteine 338. The chain crosses the membrane as a helical span at residues 367–387 (VLIWFISILAITGNIVVLIIL). Over 388–398 (ISSQYKLTVPR) the chain is Cytoplasmic. The chain crosses the membrane as a helical span at residues 399–421 (FLMCNLAFADLCIGIYLLFIASV). Residues 422–443 (DIQTKSQYYNYAIDWQTGAGCN) lie on the Extracellular side of the membrane. Cysteine 442 and cysteine 517 are joined by a disulfide. Residues 444 to 465 (AAGFFTVFASELSVYTLTVITL) traverse the membrane as a helical segment. The Cytoplasmic segment spans residues 466 to 485 (ERWHTITYAMQLDRKVRFRH). Residues 486-508 (AVIIMIFGWMFAFTVALLPIFGV) form a helical membrane-spanning segment. Topologically, residues 509 to 528 (SSYMKVSICLPMDIETPFSQ) are extracellular. A helical membrane pass occupies residues 529-550 (AYVIFLLVLNVLAFVIICACYI). Residues 551–573 (CIYFTVRNPNVISSNSDTKIAKR) are Cytoplasmic-facing. Residues 574–597 (MAILIFTDFLCMAPISFFAISASL) traverse the membrane as a helical segment. At 598 to 608 (KVPLITVSKSK) the chain is on the extracellular side. A helical membrane pass occupies residues 609-630 (ILLVLFYPINSCANPFLYAIFT). Residues 631–693 (KTFRRDFFIL…YSLVPLNHLN (63 aa)) lie on the Cytoplasmic side of the membrane.

This sequence belongs to the G-protein coupled receptor 1 family. FSH/LSH/TSH subfamily. In terms of assembly, homotrimer. Functions as a homotrimer binding the FSH hormone heterodimer composed of CGA and FSHB.

Its subcellular location is the cell membrane. Its function is as follows. G protein-coupled receptor for follitropin, the follicle-stimulating hormone. Through cAMP production activates the downstream PI3K-AKT and ERK1/ERK2 signaling pathways. This is Follicle-stimulating hormone receptor (FSHR) from Cairina moschata (Muscovy duck).